Here is a 61-residue protein sequence, read N- to C-terminus: Large ribosomal subunit protein bL32 (61 aa).

Belongs to the bacterial ribosomal protein bL32 family.

The protein is Large ribosomal subunit protein bL32 of Phytoplasma mali (strain AT).